We begin with the raw amino-acid sequence, 795 residues long: Mitochondrial inner membrane m-AAA protease component paraplegin (795 aa).

The transit peptide at 1-43 (MAVLLLLLRALRRGPGPGPRPLWGPGPAWSPGFPARPGRGRPY) directs the protein to the mitochondrion. A propeptide spans 44–105 (MASRPPGDLA…GGTFYFNTSR (62 aa)) (removed in mature form). The Mitochondrial matrix portion of the chain corresponds to 106-144 (LKQKNKEKDKSKGKAPEEDEEERRRRERDDQMYRERLRT). A disordered region spans residues 108–133 (QKNKEKDKSKGKAPEEDEEERRRRER). Basic and acidic residues predominate over residues 109–133 (KNKEKDKSKGKAPEEDEEERRRRER). A helical membrane pass occupies residues 145-165 (LLVIAVVMSLLNALSTSGGSI). Residues 166-248 (SWNDFVHEML…DRIPVSYKRT (83 aa)) lie on the Mitochondrial intermembrane side of the membrane. Residues 249 to 269 (GFFGNALYSVGMTAVGLAILW) traverse the membrane as a helical segment. Over 270–795 (YVFRLAGMTG…LGGEEPTWPK (526 aa)) the chain is Mitochondrial matrix. Ala312, Gly352, Cys353, Gly354, Lys355, Thr356, and Leu357 together coordinate ATP. Tyr505 bears the 3'-nitrotyrosine mark. His574 is a Zn(2+) binding site. Residue Glu575 is part of the active site. Residues His578 and Asp650 each coordinate Zn(2+). An interaction with PPIF region spans residues 701-795 (HEARLLVAKA…LGGEEPTWPK (95 aa)). The disordered stretch occupies residues 751-795 (PHGPKKMIAPQRWIDAQREKQDLGEEETEETQQPPLGGEEPTWPK).

The protein in the N-terminal section; belongs to the AAA ATPase family. In the C-terminal section; belongs to the peptidase M41 family. As to quaternary structure, forms heterooligomers with AFG3L2; the m-AAA protease is composed of heterohexamers of AFG3L2 and SPG7. Component of the mitochondrial permeability transition pore complex (mPTPC), at least composed of SPG7, VDAC1 and PPIF. Interacts with MAIP1. It depends on Zn(2+) as a cofactor. Upon import into the mitochondrion, the N-terminal transit peptide is cleaved by the mitochondrial-processing peptidase (MPP) to generate an intermediate form which undergoes a second proteolytic cleavage mediated by proteases AFG3L2 removing an additional N-terminal fragment to generate the proteolytically active mature form. As to expression, ubiquitous.

Its subcellular location is the mitochondrion inner membrane. The catalysed reaction is ATP + H2O = ADP + phosphate + H(+). Functionally, catalytic component of the m-AAA protease, a protease that plays a key role in proteostasis of inner mitochondrial membrane proteins, and which is essential for axonal and neuron development. SPG7 possesses both ATPase and protease activities: the ATPase activity is required to unfold substrates, threading them into the internal proteolytic cavity for hydrolysis into small peptide fragments. The m-AAA protease exerts a dual role in the mitochondrial inner membrane: it mediates the processing of specific regulatory proteins and ensures protein quality control by degrading misfolded polypeptides. Mediates protein maturation of the mitochondrial ribosomal subunit MRPL32/bL32m by catalyzing the cleavage of the presequence of MRPL32/bL32m prior to assembly into the mitochondrial ribosome. Acts as a regulator of calcium in neurons by mediating degradation of SMDT1/EMRE before its assembly with the uniporter complex, limiting the availability of SMDT1/EMRE for MCU assembly and promoting efficient assembly of gatekeeper subunits with MCU. Also regulates mitochondrial calcium by catalyzing degradation of MCU. Plays a role in the formation and regulation of the mitochondrial permeability transition pore (mPTP) and its proteolytic activity is dispensable for this function. The chain is Mitochondrial inner membrane m-AAA protease component paraplegin from Homo sapiens (Human).